We begin with the raw amino-acid sequence, 234 residues long: Enolase-phosphatase E1 (234 aa).

2 residues coordinate Mg(2+): aspartate 10 and glutamate 12. Substrate is bound by residues 125–126 (SS) and lysine 162. Aspartate 188 is a binding site for Mg(2+).

It belongs to the HAD-like hydrolase superfamily. MasA/MtnC family. In terms of assembly, monomer. Mg(2+) serves as cofactor.

The protein localises to the cytoplasm. It is found in the nucleus. The enzyme catalyses 5-methylsulfanyl-2,3-dioxopentyl phosphate + H2O = 1,2-dihydroxy-5-(methylsulfanyl)pent-1-en-3-one + phosphate. Its pathway is amino-acid biosynthesis; L-methionine biosynthesis via salvage pathway; L-methionine from S-methyl-5-thio-alpha-D-ribose 1-phosphate: step 3/6. It participates in amino-acid biosynthesis; L-methionine biosynthesis via salvage pathway; L-methionine from S-methyl-5-thio-alpha-D-ribose 1-phosphate: step 4/6. In terms of biological role, bifunctional enzyme that catalyzes the enolization of 2,3-diketo-5-methylthiopentyl-1-phosphate (DK-MTP-1-P) into the intermediate 2-hydroxy-3-keto-5-methylthiopentenyl-1-phosphate (HK-MTPenyl-1-P), which is then dephosphorylated to form the acireductone 1,2-dihydroxy-3-keto-5-methylthiopentene (DHK-MTPene). This Sordaria macrospora (strain ATCC MYA-333 / DSM 997 / K(L3346) / K-hell) protein is Enolase-phosphatase E1.